The primary structure comprises 197 residues: Recombination protein RecR (197 aa).

A C4-type zinc finger spans residues 55 to 70 (CVQCRDFTESEICTIC). The Toprim domain maps to 78 to 173 (QQLCVVESPA…RPSRLAQGMP (96 aa)).

This sequence belongs to the RecR family.

May play a role in DNA repair. It seems to be involved in an RecBC-independent recombinational process of DNA repair. It may act with RecF and RecO. In Xanthomonas euvesicatoria pv. vesicatoria (strain 85-10) (Xanthomonas campestris pv. vesicatoria), this protein is Recombination protein RecR.